Reading from the N-terminus, the 312-residue chain is Ribosomal RNA small subunit methyltransferase H (312 aa).

S-adenosyl-L-methionine-binding positions include 34-36, aspartate 54, phenylalanine 81, aspartate 102, and glutamine 109; that span reads AGH.

This sequence belongs to the methyltransferase superfamily. RsmH family.

It is found in the cytoplasm. It catalyses the reaction cytidine(1402) in 16S rRNA + S-adenosyl-L-methionine = N(4)-methylcytidine(1402) in 16S rRNA + S-adenosyl-L-homocysteine + H(+). Functionally, specifically methylates the N4 position of cytidine in position 1402 (C1402) of 16S rRNA. The sequence is that of Ribosomal RNA small subunit methyltransferase H from Geobacter sp. (strain M21).